Here is a 211-residue protein sequence, read N- to C-terminus: Large ribosomal subunit protein uL4 (211 aa).

Positions 46-55 (GNHATKTRSM) are enriched in polar residues. Positions 46–89 (GNHATKTRSMVSGGGKKPWSQKGTGRARQGSTRAPHWVGGGTVH) are disordered.

This sequence belongs to the universal ribosomal protein uL4 family. As to quaternary structure, part of the 50S ribosomal subunit.

Its function is as follows. One of the primary rRNA binding proteins, this protein initially binds near the 5'-end of the 23S rRNA. It is important during the early stages of 50S assembly. It makes multiple contacts with different domains of the 23S rRNA in the assembled 50S subunit and ribosome. In terms of biological role, forms part of the polypeptide exit tunnel. The polypeptide is Large ribosomal subunit protein uL4 (Leptospira interrogans serogroup Icterohaemorrhagiae serovar copenhageni (strain Fiocruz L1-130)).